An 859-amino-acid chain; its full sequence is MDINQDLPAIDSHRALQIWITENLKMLPLPERAHGNFFEECCYVVLHVPQSPKATQGGSSDLHYWIGKDASAEAREAAVSFVQCLQEDLGDQTVLHRESQGHESDCFHSYFHPGVIYRKGGRDSALKFAETNMYNVQRLLHIKGRKHVSATEVALSWNSFNKGDIFLLDLGKVMIQWNGPKASISEKARALTLTCNLRDRERGGRAQIAVVDAENEATNLLRIMEAVLGCRSGSLCPSVPSNSVSQLQKANVRLYHVCEKGTDLVVQELATRPLTQDLLQEDGCYLLDQGGFKIYMWQGRKSSPQEKKAALSRAVGFIQAKGYPNYTNVEVVNDGAESTAFQQLFWSWSKELDRKKHPEKSKLVQGNLEVGKLHTQPELAAQLRMVDDGSGKVEVWYIQDLQRQPVHPKYYGQLCSGNCYLVLYTYQKLGCVQYLLYLWQGHQSTVEDTKALNCSAEELDLMHQGALAQGHVTMGSEPPHFLAIFQGRLVVFQGNAGNKGERPPVSDTRLFHVQGTESHNTRTMEVPARASSLTSGDVFFLITSHVCYLWFGKGCHGDQREMARTVVSVFPGNNKETVLEGQEPLYFWEALGGRAPYPSNKRLPEEVWSIQPRLFECSSHAGCLVLTEVLFFGQEDLDKYDIMLLDTCQEIFLWLGEAAGEWKKEAVAWGLEYLRTHPAERSLATPIFVVKQGHEPATFTGWFVTWDPYKWMNSQSYEEMVGNSLGPGSAISEMTAEVHNFQLTPRLSDNKAGHPALQAFKGSQDSPENELGLDLRVDGANPSMNHTSSCSDSMVNGSLPRERLMHQALEDLPPGVDPARKEFYLSDSDFQDIFGKSKEEFYSMAKWKQQQAKKKLGFF.

Gelsolin-like repeat units lie at residues 24 to 76 (LKML…EARE), 148 to 188 (VSAT…SEKA), 264 to 308 (LVVQ…QEKK), 401 to 450 (LQRQ…EDTK), 521 to 561 (TRTM…DQRE), and 624 to 665 (LVLT…WKKE). Residues 793 to 859 (SMVNGSLPRE…QQAKKKLGFF (67 aa)) enclose the HP domain.

This sequence belongs to the villin/gelsolin family.

Its function is as follows. Possible tumor suppressor. The polypeptide is Villin-like protein (Mus musculus (Mouse)).